The primary structure comprises 194 residues: Glycerol-3-phosphate acyltransferase (194 aa).

5 helical membrane-spanning segments follow: residues 3–23 (IALLLLIAYLLGAIPTGLIVG), 47–67 (VLGKKAGIFVTIFDVAKGVLP), 78–97 (IHGIWFGLAAIIGHVYPIYL), 112–132 (ILGVNPVVFLIIAVIFFTLLF), and 153–173 (LFFDDIILQIISFLIMLLIII).

Belongs to the PlsY family. Probably interacts with PlsX.

The protein localises to the cell membrane. The catalysed reaction is an acyl phosphate + sn-glycerol 3-phosphate = a 1-acyl-sn-glycero-3-phosphate + phosphate. It participates in lipid metabolism; phospholipid metabolism. Its function is as follows. Catalyzes the transfer of an acyl group from acyl-phosphate (acyl-PO(4)) to glycerol-3-phosphate (G3P) to form lysophosphatidic acid (LPA). This enzyme utilizes acyl-phosphate as fatty acyl donor, but not acyl-CoA or acyl-ACP. The polypeptide is Glycerol-3-phosphate acyltransferase (Macrococcus caseolyticus (strain JCSC5402) (Macrococcoides caseolyticum)).